A 51-amino-acid polypeptide reads, in one-letter code: SPbeta prophage-derived uncharacterized protein YorQ (51 aa).

In Bacillus subtilis (strain 168), this protein is SPbeta prophage-derived uncharacterized protein YorQ (yorQ).